Reading from the N-terminus, the 244-residue chain is QTLTYDDIVGTGLANKCPTLDDTARGAYPIDSSQTYRIARLCLQPTTFLVKEEPKNKRQEAEFVPTKLVTRETTSLDQIQGELKVNSDGSLTFVEEDGIDFQPVTVQMAGGERIPLLFTVKNLVASTQPNVTSITTSTDFKGEFNVPSYRTANFLDPKGRGLASGYDSAIALPQAKEEELARANVKRFSLTKGQISLNVAKVDGRTGEIAGTFESEQLSDDDMGAHEPHEVKIQGVFYASIEPA.

It belongs to the PsbO family. In terms of assembly, PSII is composed of 1 copy each of membrane proteins PsbA, PsbB, PsbC, PsbD, PsbE, PsbF, PsbH, PsbI, PsbJ, PsbK, PsbL, PsbM, PsbT, PsbX, PsbY, PsbZ, Psb30/Ycf12, peripheral proteins PsbO, CyanoQ (PsbQ), PsbU, PsbV and a large number of cofactors. It forms dimeric complexes. Requires PSII binds multiple chlorophylls, carotenoids and specific lipids. as cofactor.

It is found in the cellular thylakoid membrane. Functionally, one of the extrinsic, lumenal subunits of photosystem II (PSII), which stabilize and protect the oxygen-evolving complex. PSII is a light-driven water plastoquinone oxidoreductase, using light energy to abstract electrons from H(2)O, generating a proton gradient subsequently used for ATP formation. Required for dimerization of PSII and for binding of PsbQ to PSII. In Thermostichus vulcanus (Synechococcus vulcanus), this protein is Photosystem II extrinsic protein O (psbO).